Here is a 453-residue protein sequence, read N- to C-terminus: Chromosomal replication initiator protein DnaA (453 aa).

Residues 1-78 (MTENEQLFWN…FEIFNAEITA (78 aa)) form a domain I, interacts with DnaA modulators region. The domain II stretch occupies residues 78–112 (ANYVSNDLHLQETSFSNYQQSSNEVNTLPIRKIDS). Positions 113–331 (NLKEKYTFAN…GALKNISLVA (219 aa)) are domain III, AAA+ region. ATP contacts are provided by Gly157, Gly159, Lys160, and Thr161. Residues 332–453 (DFKHAKTITV…EIETIKNKIR (122 aa)) are domain IV, binds dsDNA.

It belongs to the DnaA family. As to quaternary structure, oligomerizes as a right-handed, spiral filament on DNA at oriC.

The protein localises to the cytoplasm. Plays an essential role in the initiation and regulation of chromosomal replication. ATP-DnaA binds to the origin of replication (oriC) to initiate formation of the DNA replication initiation complex once per cell cycle. Binds the DnaA box (a 9 base pair repeat at the origin) and separates the double-stranded (ds)DNA. Forms a right-handed helical filament on oriC DNA; dsDNA binds to the exterior of the filament while single-stranded (ss)DNA is stabiized in the filament's interior. The ATP-DnaA-oriC complex binds and stabilizes one strand of the AT-rich DNA unwinding element (DUE), permitting loading of DNA polymerase. After initiation quickly degrades to an ADP-DnaA complex that is not apt for DNA replication. Binds acidic phospholipids. The polypeptide is Chromosomal replication initiator protein DnaA (Streptococcus agalactiae serotype Ia (strain ATCC 27591 / A909 / CDC SS700)).